A 359-amino-acid chain; its full sequence is tRNA/tmRNA (uracil-C(5))-methyltransferase (359 aa).

The S-adenosyl-L-methionine site is built by Gln183, Tyr211, Asn216, Glu232, and Asp292. Cys317 functions as the Nucleophile in the catalytic mechanism. Glu351 (proton acceptor) is an active-site residue.

The protein belongs to the class I-like SAM-binding methyltransferase superfamily. RNA M5U methyltransferase family. TrmA subfamily.

The enzyme catalyses uridine(54) in tRNA + S-adenosyl-L-methionine = 5-methyluridine(54) in tRNA + S-adenosyl-L-homocysteine + H(+). The catalysed reaction is uridine(341) in tmRNA + S-adenosyl-L-methionine = 5-methyluridine(341) in tmRNA + S-adenosyl-L-homocysteine + H(+). Functionally, dual-specificity methyltransferase that catalyzes the formation of 5-methyluridine at position 54 (m5U54) in all tRNAs, and that of position 341 (m5U341) in tmRNA (transfer-mRNA). The protein is tRNA/tmRNA (uracil-C(5))-methyltransferase of Pseudomonas fluorescens (strain SBW25).